A 120-amino-acid polypeptide reads, in one-letter code: 2-amino-4-hydroxy-6-hydroxymethyldihydropteridine pyrophosphokinase (120 aa).

The protein belongs to the HPPK family.

The catalysed reaction is 6-hydroxymethyl-7,8-dihydropterin + ATP = (7,8-dihydropterin-6-yl)methyl diphosphate + AMP + H(+). It functions in the pathway cofactor biosynthesis; tetrahydrofolate biosynthesis; 2-amino-4-hydroxy-6-hydroxymethyl-7,8-dihydropteridine diphosphate from 7,8-dihydroneopterin triphosphate: step 4/4. In terms of biological role, catalyzes the transfer of pyrophosphate from adenosine triphosphate (ATP) to 6-hydroxymethyl-7,8-dihydropterin, an enzymatic step in folate biosynthesis pathway. This chain is 2-amino-4-hydroxy-6-hydroxymethyldihydropteridine pyrophosphokinase (folK), found in Pseudomonas putida (Arthrobacter siderocapsulatus).